The sequence spans 529 residues: uncharacterized protein (529 aa).

ABC transporter domains are found at residues L6–L257 and I287–L526. Residues G42–S49 and G319–S326 each bind ATP.

The protein belongs to the ABC transporter superfamily.

This is an uncharacterized protein from Escherichia coli (strain K12).